The following is a 260-amino-acid chain: Indole-3-glycerol phosphate synthase (260 aa).

It belongs to the TrpC family.

The enzyme catalyses 1-(2-carboxyphenylamino)-1-deoxy-D-ribulose 5-phosphate + H(+) = (1S,2R)-1-C-(indol-3-yl)glycerol 3-phosphate + CO2 + H2O. Its pathway is amino-acid biosynthesis; L-tryptophan biosynthesis; L-tryptophan from chorismate: step 4/5. In Ruminiclostridium cellulolyticum (strain ATCC 35319 / DSM 5812 / JCM 6584 / H10) (Clostridium cellulolyticum), this protein is Indole-3-glycerol phosphate synthase.